Here is a 293-residue protein sequence, read N- to C-terminus: Movement protein BC1 (293 aa).

This sequence belongs to the begomovirus movement protein BC1 family. Binds to dimeric supercoiled plasmid DNA. Phosphorylated.

The protein resides in the host cell membrane. It is found in the host microsome membrane. The protein localises to the host endoplasmic reticulum membrane. In terms of biological role, transports viral genome to neighboring plant cells directly through plasmosdesmata, without any budding. The movement protein allows efficient cell to cell propagation, by bypassing the host cell wall barrier. Begomovirus genome is shuttled out of nucleus by Nuclear shuttle protein (NSP) and the movement protein transports the DNA-NSP complex to cell plasmodesmata and facilitates further movement across the cell wall. The polypeptide is Movement protein BC1 (Potato yellow mosaic virus (isolate Venezuela) (PYMV)).